The chain runs to 208 residues: MKAIFITLEGPDGSGKTTVGTLLNQKMEEAGIDFIKTREPGGSPISEKVRNIVLGIGNEEMDPKTEVLLIAGARRQHVVETIRPALAAGKTVLCDRFMDSSLAYQGAGRDMDMEQVLQVNLYAIEDTIPDRTYYLDVPAEVGLARIAANKGREVNRLDKEDISYHEKVQAGYEKIIKMFPDRFMRVDATMQPEEITEVILADILQQLS.

Residue 10 to 17 (GPDGSGKT) coordinates ATP.

The protein belongs to the thymidylate kinase family.

The catalysed reaction is dTMP + ATP = dTDP + ADP. Functionally, phosphorylation of dTMP to form dTDP in both de novo and salvage pathways of dTTP synthesis. The chain is Thymidylate kinase from Listeria welshimeri serovar 6b (strain ATCC 35897 / DSM 20650 / CCUG 15529 / CIP 8149 / NCTC 11857 / SLCC 5334 / V8).